Here is a 311-residue protein sequence, read N- to C-terminus: Aspartate carbamoyltransferase catalytic subunit (311 aa).

Carbamoyl phosphate contacts are provided by arginine 59 and threonine 60. An L-aspartate-binding site is contributed by lysine 87. Carbamoyl phosphate contacts are provided by arginine 109, histidine 139, and glutamine 142. 2 residues coordinate L-aspartate: arginine 172 and arginine 224. Positions 265 and 266 each coordinate carbamoyl phosphate.

This sequence belongs to the aspartate/ornithine carbamoyltransferase superfamily. ATCase family. In terms of assembly, heterododecamer (2C3:3R2) of six catalytic PyrB chains organized as two trimers (C3), and six regulatory PyrI chains organized as three dimers (R2).

It catalyses the reaction carbamoyl phosphate + L-aspartate = N-carbamoyl-L-aspartate + phosphate + H(+). The protein operates within pyrimidine metabolism; UMP biosynthesis via de novo pathway; (S)-dihydroorotate from bicarbonate: step 2/3. Functionally, catalyzes the condensation of carbamoyl phosphate and aspartate to form carbamoyl aspartate and inorganic phosphate, the committed step in the de novo pyrimidine nucleotide biosynthesis pathway. The polypeptide is Aspartate carbamoyltransferase catalytic subunit (Streptococcus equi subsp. zooepidemicus (strain MGCS10565)).